Consider the following 63-residue polypeptide: MVFPLVCSTCGRDLSEARYRLLVEQMELKKVVITYSRKCCRLKLSTQIEPYRNLTVQPSLDIN.

It belongs to the poxviridae DNA-directed RNA polymerase 7 kDa subunit family. As to quaternary structure, the DNA-dependent RNA polymerase used for intermediate and late genes expression consists of eight subunits 147 kDa, 133 kDa, 35 kDa, 30 kDa, 22 kDa, 19 kDa, 18 kDa and 7 kDa totalling more than 500 kDa in mass. The same holoenzyme, with the addition of the transcription-specificity factor RAP94, is used for early gene expression.

It localises to the virion. The enzyme catalyses RNA(n) + a ribonucleoside 5'-triphosphate = RNA(n+1) + diphosphate. Part of the DNA-dependent RNA polymerase which catalyzes the transcription of viral DNA into RNA using the four ribonucleoside triphosphates as substrates. Responsible for the transcription of early, intermediate and late genes. DNA-dependent RNA polymerase associates with the early transcription factor (ETF) thereby allowing the early genes transcription. Late transcription, and probably also intermediate transcription, require newly synthesized RNA polymerase. This chain is DNA-directed RNA polymerase 7 kDa subunit (RPO7), found in Fowlpox virus (strain NVSL) (FPV).